The primary structure comprises 264 residues: 5'-nucleotidase SurE (264 aa).

Residues D10, D11, S43, and N99 each contribute to the a divalent metal cation site.

This sequence belongs to the SurE nucleotidase family. It depends on a divalent metal cation as a cofactor.

The protein resides in the cytoplasm. The catalysed reaction is a ribonucleoside 5'-phosphate + H2O = a ribonucleoside + phosphate. Its function is as follows. Nucleotidase that shows phosphatase activity on nucleoside 5'-monophosphates. This chain is 5'-nucleotidase SurE, found in Methanococcus vannielii (strain ATCC 35089 / DSM 1224 / JCM 13029 / OCM 148 / SB).